We begin with the raw amino-acid sequence, 291 residues long: Nucleotide-binding protein Cthe_0113 (291 aa).

Residue 8–15 (GISGAGKS) coordinates ATP. GTP is bound at residue 59-62 (DIRG).

Belongs to the RapZ-like family.

In terms of biological role, displays ATPase and GTPase activities. The sequence is that of Nucleotide-binding protein Cthe_0113 from Acetivibrio thermocellus (strain ATCC 27405 / DSM 1237 / JCM 9322 / NBRC 103400 / NCIMB 10682 / NRRL B-4536 / VPI 7372) (Clostridium thermocellum).